The sequence spans 171 residues: Adenine phosphoribosyltransferase (171 aa).

This sequence belongs to the purine/pyrimidine phosphoribosyltransferase family. As to quaternary structure, homodimer.

It localises to the cytoplasm. It catalyses the reaction AMP + diphosphate = 5-phospho-alpha-D-ribose 1-diphosphate + adenine. It participates in purine metabolism; AMP biosynthesis via salvage pathway; AMP from adenine: step 1/1. Catalyzes a salvage reaction resulting in the formation of AMP, that is energically less costly than de novo synthesis. The sequence is that of Adenine phosphoribosyltransferase from Acidiphilium cryptum (strain JF-5).